A 126-amino-acid chain; its full sequence is MTSLEDSIKVEVKTEYIEGQSSPTEERYLFRYTITIVNLGEKAVTLKSRYWSITDANNHNSEVRGEGVVGETPTIEPDSAYQYTSGTVLETPLGVMQGSYTMITGEGESFKAQIPPFRLAVPGMLH.

In terms of domain architecture, ApaG spans 2–126 (TSLEDSIKVE…FRLAVPGMLH (125 aa)).

The polypeptide is Protein ApaG (Shewanella sediminis (strain HAW-EB3)).